A 559-amino-acid polypeptide reads, in one-letter code: Excitatory amino acid transporter 5 (559 aa).

The Cytoplasmic segment spans residues Met1–His16. The next 3 membrane-spanning stretches (helical) occupy residues Asn17 to Leu37, Met60 to Leu80, and Ala94 to Ile114. At His115–Thr215 the chain is on the extracellular side. N-linked (GlcNAc...) asparagine glycosylation occurs at Asn190. Residues Ser216–Gly236 form a helical membrane-spanning segment. Residue Asn253 is glycosylated (N-linked (GlcNAc...) asparagine). 6 helical membrane passes run Ile259–Ile279, Thr298–Ile318, Gly329–Ile349, Val371–Ile391, Ala413–Leu433, and Phe456–Cys476.

The protein belongs to the dicarboxylate/amino acid:cation symporter (DAACS) (TC 2.A.23) family. SLC1A7 subfamily. Interacts with the PDZ domains of DLG4. As to expression, expressed in retina, located in both cone and rod photoreceptor terminals and in axon terminals of rod bipolar cells.

It is found in the photoreceptor inner segment membrane. It localises to the synaptic cell membrane. The catalysed reaction is K(+)(in) + L-glutamate(out) + 3 Na(+)(out) + H(+)(out) = K(+)(out) + L-glutamate(in) + 3 Na(+)(in) + H(+)(in). It carries out the reaction K(+)(in) + L-aspartate(out) + 3 Na(+)(out) + H(+)(out) = K(+)(out) + L-aspartate(in) + 3 Na(+)(in) + H(+)(in). It catalyses the reaction D-aspartate(out) + K(+)(in) + 3 Na(+)(out) + H(+)(out) = D-aspartate(in) + K(+)(out) + 3 Na(+)(in) + H(+)(in). Functionally, sodium-dependent, high-affinity amino acid transporter that mediates the uptake of L-glutamate and also L-aspartate and D-aspartate. Functions as a symporter that transports one amino acid molecule together with two or three Na(+) ions and one proton, in parallel with the counter-transport of one K(+) ion. Acts primarily as an inhibitory glutamate-gated chloride channel being a major inhibitory presynaptic receptor at mammalian rod bipolar cell axon terminals. Glutamate binding gates a large Cl(-) conductance that mediates inhibition, affecting visual processing in the retina. In Mus musculus (Mouse), this protein is Excitatory amino acid transporter 5.